The following is a 161-amino-acid chain: Regulator of ribonuclease activity A (161 aa).

Belongs to the RraA family. As to quaternary structure, homotrimer. Binds to both RNA-binding sites in the C-terminal region of Rne and to RhlB.

The protein localises to the cytoplasm. In terms of biological role, globally modulates RNA abundance by binding to RNase E (Rne) and regulating its endonucleolytic activity. Can modulate Rne action in a substrate-dependent manner by altering the composition of the degradosome. Modulates RNA-binding and helicase activities of the degradosome. In Erwinia tasmaniensis (strain DSM 17950 / CFBP 7177 / CIP 109463 / NCPPB 4357 / Et1/99), this protein is Regulator of ribonuclease activity A.